Reading from the N-terminus, the 578-residue chain is Arginine--tRNA ligase (578 aa).

The 'HIGH' region motif lies at 123–133; sequence PNIAKEMHVGH.

The protein belongs to the class-I aminoacyl-tRNA synthetase family. In terms of assembly, monomer.

It localises to the cytoplasm. The catalysed reaction is tRNA(Arg) + L-arginine + ATP = L-arginyl-tRNA(Arg) + AMP + diphosphate. The polypeptide is Arginine--tRNA ligase (Baumannia cicadellinicola subsp. Homalodisca coagulata).